A 308-amino-acid chain; its full sequence is Glutaminase (308 aa).

Substrate-binding residues include Ser68, Asn118, Glu162, Asn169, Tyr193, Tyr244, and Val262.

It belongs to the glutaminase family. In terms of assembly, homotetramer.

It carries out the reaction L-glutamine + H2O = L-glutamate + NH4(+). The sequence is that of Glutaminase from Hahella chejuensis (strain KCTC 2396).